Consider the following 147-residue polypeptide: Small ribosomal subunit protein uS13 (147 aa).

Residues 115–147 are disordered; sequence SYKGRRHEAGLPVRGQRTKSTFRNSSSVGVKRS. Positions 132–147 are enriched in polar residues; that stretch reads TKSTFRNSSSVGVKRS.

The protein belongs to the universal ribosomal protein uS13 family. As to quaternary structure, part of the 30S ribosomal subunit. Forms a loose heterodimer with protein S19. Forms two bridges to the 50S subunit in the 70S ribosome.

Its function is as follows. Located at the top of the head of the 30S subunit, it contacts several helices of the 16S rRNA. In the 70S ribosome it contacts the 23S rRNA (bridge B1a) and protein L5 of the 50S subunit (bridge B1b), connecting the 2 subunits; these bridges are implicated in subunit movement. The chain is Small ribosomal subunit protein uS13 from Methanobrevibacter smithii (strain ATCC 35061 / DSM 861 / OCM 144 / PS).